A 154-amino-acid chain; its full sequence is Endoribonuclease YbeY (154 aa).

Zn(2+) is bound by residues H120, H124, and H130.

It belongs to the endoribonuclease YbeY family. Zn(2+) is required as a cofactor.

The protein localises to the cytoplasm. Functionally, single strand-specific metallo-endoribonuclease involved in late-stage 70S ribosome quality control and in maturation of the 3' terminus of the 16S rRNA. The polypeptide is Endoribonuclease YbeY (Oceanobacillus iheyensis (strain DSM 14371 / CIP 107618 / JCM 11309 / KCTC 3954 / HTE831)).